The sequence spans 596 residues: Fructan 1-exohydrolase w3 (596 aa).

The first 20 residues, 1–20 (MAQAWAFLLPVLVLGSYVTS), serve as a signal peptide directing secretion. The active site involves Asp-75. N-linked (GlcNAc...) asparagine glycans are attached at residues Asn-168, Asn-236, and Asn-248. A disulfide bridge connects residues Cys-446 and Cys-492.

This sequence belongs to the glycosyl hydrolase 32 family. As to expression, expressed in the stem, particularly the penultimate internode. Little expression is detected in roots and in the peduncle part of the stem.

It catalyses the reaction Hydrolysis of terminal, non-reducing (2-&gt;1)-linked beta-D-fructofuranose residues in fructans.. Inhibited by sucrose. Hydrolyzes inulin-type beta-(2,1)-fructans and beta-(2,1)-linkages in branched fructans. Has low activity against beta-(2,6)-linked fructans. May play a role as a beta-(2,1)-trimmer during graminan biosynthesis. The polypeptide is Fructan 1-exohydrolase w3 (Triticum aestivum (Wheat)).